The chain runs to 477 residues: Argininosuccinate lyase (477 aa).

Belongs to the lyase 1 family. Argininosuccinate lyase subfamily.

Its subcellular location is the cytoplasm. It catalyses the reaction 2-(N(omega)-L-arginino)succinate = fumarate + L-arginine. It participates in amino-acid biosynthesis; L-arginine biosynthesis; L-arginine from L-ornithine and carbamoyl phosphate: step 3/3. The polypeptide is Argininosuccinate lyase (Corynebacterium efficiens (strain DSM 44549 / YS-314 / AJ 12310 / JCM 11189 / NBRC 100395)).